Here is a 214-residue protein sequence, read N- to C-terminus: Metalloproteinase inhibitor 3 (214 aa).

The N-terminal stretch at 1-26 (MSVCALTLILGCFLLFLGDISKPAEG) is a signal peptide. C27 is a binding site for Zn(2+). Involved in metalloproteinase-binding stretches follow at residues 27-30 (CTCA) and 91-92 (ES). 6 disulfides stabilise this stretch: C27–C94, C29–C121, C39–C146, C148–C195, C153–C158, and C166–C187. Residues 27–146 (CTCAPSHPQD…GLNHRYPLGC (120 aa)) enclose the NTR domain.

The protein belongs to the protease inhibitor I35 (TIMP) family.

The protein localises to the secreted. It is found in the extracellular space. Its subcellular location is the extracellular matrix. Its function is as follows. Complexes with metalloproteinases (such as collagenases) and irreversibly inactivates them by binding to their catalytic zinc cofactor. May form part of a tissue-specific acute response to remodeling stimuli. In Xenopus laevis (African clawed frog), this protein is Metalloproteinase inhibitor 3 (timp3).